We begin with the raw amino-acid sequence, 189 residues long: MIEVRKEIRIAGFGGQGVILAGIVLGKAASLYDGLYAVQTQSYGPEARGGASRAEVVISDHEIDYPKVQSPDILVAMSHQALLTYMDDLKRGGALIVDPDMVVEAEIEDFIRAREVKYFRAPATRTAEERVGITIVANMVMIGALTEATGIVSVRAAEEAIKDSVPPGTEEKNLMAFQAGRELIMEGSR.

As to quaternary structure, heterotetramer of the KorA, KorB, KorC and KorD subunits.

The catalysed reaction is 2 oxidized [2Fe-2S]-[ferredoxin] + 2-oxoglutarate + CoA = succinyl-CoA + 2 reduced [2Fe-2S]-[ferredoxin] + CO2 + H(+). The chain is 2-oxoglutarate synthase subunit KorC (korC) from Methanothermobacter thermautotrophicus (strain ATCC 29096 / DSM 1053 / JCM 10044 / NBRC 100330 / Delta H) (Methanobacterium thermoautotrophicum).